A 359-amino-acid polypeptide reads, in one-letter code: Aspartate carbamoyltransferase catalytic subunit (359 aa).

Positions 52 and 53 each coordinate carbamoyl phosphate. K81 lines the L-aspartate pocket. R102, H130, and Q133 together coordinate carbamoyl phosphate. R163 and R224 together coordinate L-aspartate. Carbamoyl phosphate-binding residues include L264 and P265.

The protein belongs to the aspartate/ornithine carbamoyltransferase superfamily. ATCase family. As to quaternary structure, heterododecamer (2C3:3R2) of six catalytic PyrB chains organized as two trimers (C3), and six regulatory PyrI chains organized as three dimers (R2).

The enzyme catalyses carbamoyl phosphate + L-aspartate = N-carbamoyl-L-aspartate + phosphate + H(+). The protein operates within pyrimidine metabolism; UMP biosynthesis via de novo pathway; (S)-dihydroorotate from bicarbonate: step 2/3. Functionally, catalyzes the condensation of carbamoyl phosphate and aspartate to form carbamoyl aspartate and inorganic phosphate, the committed step in the de novo pyrimidine nucleotide biosynthesis pathway. In Brachyspira hyodysenteriae (strain ATCC 49526 / WA1), this protein is Aspartate carbamoyltransferase catalytic subunit.